The chain runs to 137 residues: Small ribosomal subunit protein uS12 (137 aa).

Asp-89 carries the 3-methylthioaspartic acid modification. Residues 105–137 (AGVAGRTQRRSKYGAKRPKAGQAAAPAKGKGKK) form a disordered region. The span at 111–123 (TQRRSKYGAKRPK) shows a compositional bias: basic residues. Positions 124 to 137 (AGQAAAPAKGKGKK) are enriched in low complexity.

It belongs to the universal ribosomal protein uS12 family. Part of the 30S ribosomal subunit. Contacts proteins S8 and S17. May interact with IF1 in the 30S initiation complex.

In terms of biological role, with S4 and S5 plays an important role in translational accuracy. Its function is as follows. Interacts with and stabilizes bases of the 16S rRNA that are involved in tRNA selection in the A site and with the mRNA backbone. Located at the interface of the 30S and 50S subunits, it traverses the body of the 30S subunit contacting proteins on the other side and probably holding the rRNA structure together. The combined cluster of proteins S8, S12 and S17 appears to hold together the shoulder and platform of the 30S subunit. This chain is Small ribosomal subunit protein uS12, found in Phocaeicola vulgatus (strain ATCC 8482 / DSM 1447 / JCM 5826 / CCUG 4940 / NBRC 14291 / NCTC 11154) (Bacteroides vulgatus).